The following is a 153-amino-acid chain: Endoribonuclease YbeY (153 aa).

H114, H118, and H124 together coordinate Zn(2+).

Belongs to the endoribonuclease YbeY family. Zn(2+) serves as cofactor.

The protein localises to the cytoplasm. Single strand-specific metallo-endoribonuclease involved in late-stage 70S ribosome quality control and in maturation of the 3' terminus of the 16S rRNA. The protein is Endoribonuclease YbeY of Shewanella amazonensis (strain ATCC BAA-1098 / SB2B).